The following is a 616-amino-acid chain: Protein RIK (616 aa).

Positions 1–11 (MTEDRAHKVAD) are enriched in basic and acidic residues. Positions 1 to 32 (MTEDRAHKVADEPAASGRQSPERKKRKWDQPA) are disordered. The region spanning 198–304 (GTTSESISVP…AKVLAENLLD (107 aa)) is the KH domain. Polar residues-rich tracts occupy residues 432–449 (TQAV…TKGN), 475–484 (TESQNSQQGS), and 491–502 (LDSSGNIGSSSI). Disordered regions lie at residues 432 to 455 (TQAV…LDAE) and 467 to 616 (LPVS…HTCV). Positions 534–564 (LPPPLKSMLPLPPRSMPPPPPKSMPPPPPKF) are enriched in pro residues. Basic and acidic residues-rich tracts occupy residues 565–575 (PSDEFLSRNEN) and 598–610 (SERR…EEKN).

Interacts with RS2. Expressed in vegetative tissues. More abundant in apices and young leaf primordia than in fully expanded leaf tissues.

The protein localises to the nucleus. The sequence is that of Protein RIK from Zea mays (Maize).